The chain runs to 253 residues: Probable glutathione transferase omega-2 (253 aa).

Residues 25-105 (GIYRIYNMRF…YLDDLFPESR (81 aa)) form the GST N-terminal domain. The active-site Nucleophile is Cys35. Residues Lys62, Val75, and 89 to 90 (ES) each bind glutathione. The GST C-terminal domain occupies 110 to 238 (DPYEKVQQKL…SQPTEMGVGF (129 aa)).

Belongs to the GST superfamily. Omega family.

The enzyme catalyses RX + glutathione = an S-substituted glutathione + a halide anion + H(+). It carries out the reaction L-dehydroascorbate + 2 glutathione = glutathione disulfide + L-ascorbate. The catalysed reaction is methylarsonate + 2 glutathione + H(+) = methylarsonous acid + glutathione disulfide + H2O. Exhibits glutathione-dependent thiol transferase activity. Has dehydroascorbate reductase activity and may contribute to the recycling of ascorbic acid. Participates in the biotransformation of inorganic arsenic and reduces monomethylarsonic acid (MMA). The protein is Probable glutathione transferase omega-2 of Caenorhabditis briggsae.